The primary structure comprises 25 residues: Phospholipase A1 verutoxin-2a (25 aa).

Belongs to the AB hydrolase superfamily. Lipase family. Post-translationally, contains six disulfide bonds. In terms of tissue distribution, expressed by the venom gland.

The protein resides in the secreted. The catalysed reaction is a 1,2-diacyl-sn-glycero-3-phosphocholine + H2O = a 2-acyl-sn-glycero-3-phosphocholine + a fatty acid + H(+). It carries out the reaction 1-(9Z-octadecenoyl)-2-hexadecanoyl-sn-glycero-3-phosphocholine + H2O = 2-hexadecanoyl-sn-glycero-3-phosphocholine + (9Z)-octadecenoate + H(+). It catalyses the reaction a 1-acyl-sn-glycero-3-phosphocholine + H2O = sn-glycerol 3-phosphocholine + a fatty acid + H(+). It functions in the pathway phospholipid metabolism. Its activity is regulated as follows. Activity is maximal in the presence of calcium. However, unlike phospholipases A2 whose catalytic activity is strictly calcium-dependent, this enzyme shows considerable catalytic activity on phosphatidylcholine emulsified in calcium free solution; the catalytic activity of VT-2a assayed in the absence of calcium ions is 18-20% of that assayed in solution containing calcium ions. Its function is as follows. Catalyzes the hydrolysis of glycerophospholipids such as phosphatidylcholine (1,2-diacyl-sn-glycero-3-phosphocholine) and has a moderate activity to hydrolyze lysoglycerophospholipids such as lysophosphatidylcholine (1-acyl-sn-glycero-3-phosphocholine), but is unable to hydrolyze sphingomyelin. In addition to acting as an allergen, it possesses a potent hemolytic activity on red blood cells of mice (98.8% of hemolysis at 3.0 ug/ml). This Vespa velutina (Asian yellow-legged hornet) protein is Phospholipase A1 verutoxin-2a.